A 430-amino-acid polypeptide reads, in one-letter code: Mitochondrial distribution and morphology protein 12 (430 aa).

The region spanning 1–430 (MSIDIDWERA…VYPSFWTFLI (430 aa)) is the SMP-LTD domain. 3 disordered regions span residues 61 to 117 (DLSD…YESN), 177 to 276 (TPLG…RMRE), and 352 to 377 (MGPE…KPSS). The segment covering 69 to 82 (FYEDDDENFSDSSE) has biased composition (acidic residues). Residues 85–96 (SPTREPVDRYGN) show a composition bias toward basic and acidic residues. Polar residues-rich tracts occupy residues 211–233 (SAQS…SMSI) and 241–251 (ASQGMPNNQGQ). Residues 265–276 (PLDDTPPRRMRE) are compositionally biased toward basic and acidic residues.

This sequence belongs to the MDM12 family. In terms of assembly, component of the ER-mitochondria encounter structure (ERMES) or MDM complex, composed of MMM1, MDM10, MDM12 and MDM34. An MMM1 homodimer associates with one molecule of MDM12 on each side in a pairwise head-to-tail manner, and the SMP-LTD domains of MMM1 and MDM12 generate a continuous hydrophobic tunnel for phospholipid trafficking.

Its subcellular location is the mitochondrion outer membrane. The protein localises to the endoplasmic reticulum membrane. Its function is as follows. Component of the ERMES/MDM complex, which serves as a molecular tether to connect the endoplasmic reticulum (ER) and mitochondria. Components of this complex are involved in the control of mitochondrial shape and protein biogenesis, and function in nonvesicular lipid trafficking between the ER and mitochondria. MDM12 is required for the interaction of the ER-resident membrane protein MMM1 and the outer mitochondrial membrane-resident beta-barrel protein MDM10. The MDM12-MMM1 subcomplex functions in the major beta-barrel assembly pathway that is responsible for biogenesis of all mitochondrial outer membrane beta-barrel proteins, and acts in a late step after the SAM complex. The MDM10-MDM12-MMM1 subcomplex further acts in the TOM40-specific pathway after the action of the MDM12-MMM1 complex. Essential for establishing and maintaining the structure of mitochondria and maintenance of mtDNA nucleoids. In Ajellomyces capsulatus (strain G186AR / H82 / ATCC MYA-2454 / RMSCC 2432) (Darling's disease fungus), this protein is Mitochondrial distribution and morphology protein 12.